Consider the following 912-residue polypeptide: MASAPVLQPSPKRTVASHVPFADLCSTLERIQTCKSRPEKTKYFKDFLDSWRKFHSALHQKEKDVTDSFYPAMRLILPQLERERMAYGIKETMLAKLYIELLNLPKDGKDAVKLLNYRTPTGSRGDAGDFAMIAYFVLKPRSPKRGRLTVEQVNELLDAIANNNAAKNKGLVKKSLLQLITQSTALEQKWLIRMIIKDLKLGVSQQTIFSIFHPDAAELHNVTTDLEKVCRQLHDPSVSLSDVSIMLFSAFKPMLAAIADVQQIEKQMNNQVFYIETKLDGERMQMHKDGDVYKYFSRNGFDYTQQFGASPVDGSLTPFIHNVFKSDIQNCILDGEMMAYNPETQTFMQKGNKFDIKRMVEDSDLQTCFCVFDVLMINDQKLAHESLSKRYKILSNVFTPLTGRIHVVHKKSARTRKEVIDALNEAIDNREEGIMVKDPMSTYKPDKRGEGWLKIKPEYVNGLMDELDLLIVGGYWGKGSRGGMMSHFLCAVAETPAPNEKPTVFHSICRVGSGYTMKELYDLGLKLAKHWKPYNRKDPPCNILCGTEKPEMYIEPCNSVIVQIKAAEIVNSDMYKTDCTLRFPRIEKIREDKEWYECMTLDMLEHLRSRAEGKLASKHLYIDEYDEPQEKKRRTVPKVKKVIGIAEQFKAPDLSNVNKVSSMFEDVEFCVMTGMGRYSKSELESRIAECGGSVVQNPGPDTYCVIVGAENVRVKNIIASNKYDVVKAEWLLQCFQSKMLVPWQPAFMIHMSPETREHFAREYDCYGDSYTADTDVAQLKEVFSRVKDNKKMPLDLIAELEERYSWNSCKLCIFRGNTIYVDYYAIINKPSTKIHGTRLSIRALELRFYGAKVVPLLEEGVSHVVIGEDHSRVKEMKALRRMFGKKFKIVSELWVTESVKEGVPKNETQFLI.

ATP-binding residues include E276, T277, K278, L279, R283, E336, K350, F372, E432, K437, K454, and K456. The active-site N6-AMP-lysine intermediate is the K278. Residue E336 coordinates Mg(2+). A Mg(2+)-binding site is contributed by E432. Residues 615 to 625 (LASKHLYIDEY) are required for catalytic activity. 2 BRCT domains span residues 659–748 (KVSS…PAFM) and 809–912 (CKLC…QFLI).

This sequence belongs to the ATP-dependent DNA ligase family. In terms of assembly, interacts with XRCC4; the LIG4-XRCC4 subcomplex has a 1:2 stoichiometry. Component of the core long-range non-homologous end joining (NHEJ) complex (also named DNA-PK complex) composed of PRKDC, LIG4, XRCC4, XRCC6/Ku70, XRCC5/Ku86 and NHEJ1/XLF. Additional component of the NHEJ complex includes PAXX. Following autophosphorylation, PRKDC dissociates from DNA, leading to formation of the short-range NHEJ complex, composed of LIG4, XRCC4, XRCC6/Ku70, XRCC5/Ku86 and NHEJ1/XLF. Mg(2+) serves as cofactor.

It is found in the nucleus. It carries out the reaction ATP + (deoxyribonucleotide)n-3'-hydroxyl + 5'-phospho-(deoxyribonucleotide)m = (deoxyribonucleotide)n+m + AMP + diphosphate.. Its function is as follows. DNA ligase involved in DNA non-homologous end joining (NHEJ); required for double-strand break (DSB) repair and V(D)J recombination. Catalyzes the NHEJ ligation step of the broken DNA during DSB repair by resealing the DNA breaks after the gap filling is completed. Joins single-strand breaks in a double-stranded polydeoxynucleotide in an ATP-dependent reaction. LIG4 is mechanistically flexible: it can ligate nicks as well as compatible DNA overhangs alone, while in the presence of XRCC4, it can ligate ends with 2-nucleotides (nt) microhomology and 1-nt gaps. Forms a subcomplex with XRCC4; the LIG4-XRCC4 subcomplex is responsible for the NHEJ ligation step and XRCC4 enhances the joining activity of LIG4. This Gallus gallus (Chicken) protein is DNA ligase 4.